The chain runs to 254 residues: Short-chain dehydrogenase srdF (254 aa).

8 residues coordinate NADP(+): isoleucine 18, serine 37, glutamate 67, asparagine 95, tyrosine 167, lysine 171, valine 199, and threonine 201. Tyrosine 167 (proton donor) is an active-site residue. Lysine 171 acts as the Lowers pKa of active site Tyr in catalysis.

The protein belongs to the short-chain dehydrogenases/reductases (SDR) family.

Short-chain dehydrogenase; part of the gene cluster that mediates the biosynthesis of sordarial, a salicylic aldehyde structurally related to the phytotoxin pyriculol. The most interesting aspect of this pathway is formation of an aromatic product from the highly reducing polyketide synthase srdA. SrdA synthesizes a reduced polyketide chain from one molecule of acetyl-CoA and five molecules of malonyl-CoA. The polyketide chain is then reductively released as an aldehyde. The oxidoreductases srdC, srdD and srdE then oxidize one of the hydroxy groups to facilitate the intramolecular aldol condensation, followed by dehydration to yield a salicylic aldehyde. This aldehyde can undergo facile reduction by endogenous reductases to yield the alcohol 1-hydroxy-2-hydroxymethyl-3-pent-1,3-dienylbenzene. The flavin-dependent srdI counteract against the propensity of the aldehydes to be reduced under physiological conditions and is responsible for reoxidizing 1-hydroxy-2-hydroxymethyl-3-pent-1,3-dienylbenzene back to the salicylic aldehyde. This salicylic aldehyde is then selectively epoxidized by the cupin-domain-containing oxidoreductase srdB to yield the epoxide, which can be hydrolyzed stereoselectively by the hydrolase srdG to give the final product sordarial. The sequence is that of Short-chain dehydrogenase srdF from Neurospora crassa (strain ATCC 24698 / 74-OR23-1A / CBS 708.71 / DSM 1257 / FGSC 987).